A 245-amino-acid chain; its full sequence is Glutathione S-transferase T1 (245 aa).

Residues 2–83 (MKLKVYADRM…YLSSAFPSVA (82 aa)) enclose the GST N-terminal domain. Glutathione contacts are provided by residues 12–13 (SQ), 41–42 (QL), 54–55 (KV), and 67–68 (ES). The GST C-terminal domain occupies 90–233 (DLSKRAKIHS…KEGFQKRREM (144 aa)). Positions 243–245 (SKI) match the Microbody targeting signal motif.

Belongs to the GST superfamily. Theta family.

It is found in the nucleus. Its subcellular location is the peroxisome. The enzyme catalyses RX + glutathione = an S-substituted glutathione + a halide anion + H(+). Its function is as follows. In vitro, possesses glutathione S-transferase activity toward 1-chloro-2,4-dinitrobenzene (CDNB) and p-nitrobenzyl chloride (pNBC), and glutathione peroxidase activity toward cumene hydroperoxide and linoleic acid-13-hydroperoxide. May be involved in the conjugation of reduced glutathione to a wide number of exogenous and endogenous hydrophobic electrophiles and have a detoxification role against certain herbicides. This Arabidopsis thaliana (Mouse-ear cress) protein is Glutathione S-transferase T1 (GSTT1).